The following is a 167-amino-acid chain: Large ribosomal subunit protein uL10 (167 aa).

This sequence belongs to the universal ribosomal protein uL10 family. As to quaternary structure, part of the ribosomal stalk of the 50S ribosomal subunit. The N-terminus interacts with L11 and the large rRNA to form the base of the stalk. The C-terminus forms an elongated spine to which L12 dimers bind in a sequential fashion forming a multimeric L10(L12)X complex.

In terms of biological role, forms part of the ribosomal stalk, playing a central role in the interaction of the ribosome with GTP-bound translation factors. The polypeptide is Large ribosomal subunit protein uL10 (Cytophaga hutchinsonii (strain ATCC 33406 / DSM 1761 / CIP 103989 / NBRC 15051 / NCIMB 9469 / D465)).